A 451-amino-acid chain; its full sequence is F-box/kelch-repeat protein At1g74510 (451 aa).

The region spanning 93–139 is the F-box domain; the sequence is SSPVTRLDQNALLNCLAHCSLSDFGSIASTNRTFRSLIKDSELYRLR. Kelch repeat units lie at residues 137–188, 193–236, 237–284, 286–333, and 349–395; these read RLRR…KESL, ELLV…SLGE, IAVI…FMDG, FYCI…DQAK, and AVVK…GMAF.

The chain is F-box/kelch-repeat protein At1g74510 from Arabidopsis thaliana (Mouse-ear cress).